A 126-amino-acid polypeptide reads, in one-letter code: Protein ApaG (126 aa).

The ApaG domain occupies 2-126; the sequence is TSLEDSIKVE…FRLAVPGMLH (125 aa).

The chain is Protein ApaG from Shewanella sediminis (strain HAW-EB3).